The sequence spans 401 residues: Mu-type opioid receptor (401 aa).

Topologically, residues 1–69 (MDSGAVPTNA…CPSAGSPSMI (69 aa)) are extracellular. N-linked (GlcNAc...) asparagine glycans are attached at residues Asn-9, Asn-12, Asn-34, Asn-41, and Asn-49. Residues 70–94 (TAIIIMALYSIVCVVGLFGNFLVMY) form a helical membrane-spanning segment. Residues 95–107 (VIVRYTKMKTATN) are Cytoplasmic-facing. Residues 108–132 (IYIFNLALADALATSTLPFQSVNYL) traverse the membrane as a helical segment. At 133-143 (MGTWPFGTILC) the chain is on the extracellular side. A disulfide bridge connects residues Cys-143 and Cys-220. A helical membrane pass occupies residues 144 to 166 (KIVISIDYYNMFTSIFTLCTMSV). Over 167-186 (DRYIAVCHPVKALDLRTPRN) the chain is Cytoplasmic. Tyr-169 bears the Phosphotyrosine mark. A helical membrane pass occupies residues 187–208 (AKIINICNWILSSAIGLPVMFM). The Extracellular segment spans residues 209–231 (ATTKYRQGSIDCTLTFSHPTWYW). Residues 232-256 (ENLLKICVFIFAFIMPILIITVCYG) traverse the membrane as a helical segment. Residues 257–280 (LMILRLKSVRMLSGSKEKDRNLRR) lie on the Cytoplasmic side of the membrane. The helical transmembrane segment at 281–307 (ITRMVLVVVAVFIVCWTPIHIYVIIKA) threads the bilayer. Topologically, residues 308–315 (LITIPETT) are extracellular. A helical transmembrane segment spans residues 316 to 339 (FQTVSWHFCIALGYTNSCLNPVLY). Positions 335–339 (NPVLY) match the NPxxY; plays a role in stabilizing the activated conformation of the receptor motif. Residues 340–401 (AFLDENFKRC…NLEAETTPLP (62 aa)) lie on the Cytoplasmic side of the membrane. Cys-354 carries the S-palmitoyl cysteine lipid modification. The segment at 365–389 (NSTRIRQNTRDHPSTANTVDRTNHQ) is disordered. Ser-366 is modified (phosphoserine). Thr-373 is modified (phosphothreonine). At Ser-378 the chain carries Phosphoserine. Thr-397 is modified (phosphothreonine).

This sequence belongs to the G-protein coupled receptor 1 family. In terms of assembly, forms homooligomers and heterooligomers with other GPCRs, such as OPRD1, OPRK1, OPRL1, NPFFR2, ADRA2A, SSTR2, CNR1 and CCR5 (probably in dimeric forms). Interacts with heterotrimeric G proteins; interaction with a heterotrimeric complex containing GNAI1, GNB1 and GNG2 stabilizes the active conformation of the receptor and increases its affinity for endomorphin-2, the synthetic opioid peptide DAMGO and for morphinan agonists. Interacts with PPL; the interaction disrupts agonist-mediated G-protein activation. Interacts (via C-terminus) with DNAJB4 (via C-terminus). Interacts with calmodulin; the interaction inhibits the constitutive activity of OPRM1; it abolishes basal and attenuates agonist-stimulated G-protein coupling. Interacts with FLNA, PLD2, RANBP9 and WLS and GPM6A. Interacts with RTP4. Interacts with SYP and GNAS. Interacts with RGS9, RGS17, RGS20, RGS4, PPP1R9B and HINT1. Post-translationally, phosphorylated. Differentially phosphorylated in basal and agonist-induced conditions. Agonist-mediated phosphorylation modulates receptor internalization. Phosphorylated by GRK2 in a agonist-dependent manner. Phosphorylation at Tyr-169 requires receptor activation, is dependent on non-receptor protein tyrosine kinase Src and results in a decrease in agonist efficacy by reducing G-protein coupling efficiency. Phosphorylated on tyrosine residues; the phosphorylation is involved in agonist-induced G-protein-independent receptor down-regulation. Phosphorylation at Ser-378 is involved in G-protein-dependent but not beta-arrestin-dependent activation of the ERK pathway. Ubiquitinated. A basal ubiquitination seems not to be related to degradation. Ubiquitination is increased upon formation of OPRM1:OPRD1 oligomers leading to proteasomal degradation; the ubiquitination is diminished by RTP4.

It is found in the cell membrane. The protein localises to the cell projection. Its subcellular location is the axon. It localises to the perikaryon. The protein resides in the dendrite. It is found in the endosome. In terms of biological role, receptor for endogenous opioids such as beta-endorphin and endomorphin. Receptor for natural and synthetic opioids including morphine, heroin, DAMGO, fentanyl, etorphine, buprenorphin and methadone. Also activated by enkephalin peptides, such as Met-enkephalin or Met-enkephalin-Arg-Phe, with higher affinity for Met-enkephalin-Arg-Phe. Agonist binding to the receptor induces coupling to an inactive GDP-bound heterotrimeric G-protein complex and subsequent exchange of GDP for GTP in the G-protein alpha subunit leading to dissociation of the G-protein complex with the free GTP-bound G-protein alpha and the G-protein beta-gamma dimer activating downstream cellular effectors. The agonist- and cell type-specific activity is predominantly coupled to pertussis toxin-sensitive G(i) and G(o) G alpha proteins, GNAI1, GNAI2, GNAI3 and GNAO1, and to a lesser extent to pertussis toxin-insensitive G alpha proteins GNAZ and GNA15. They mediate an array of downstream cellular responses, including inhibition of adenylate cyclase activity and both N-type and L-type calcium channels, activation of inward rectifying potassium channels, mitogen-activated protein kinase (MAPK), phospholipase C (PLC), phosphoinositide/protein kinase (PKC), phosphoinositide 3-kinase (PI3K) and regulation of NF-kappa-B. Also couples to adenylate cyclase stimulatory G alpha proteins. The selective temporal coupling to G-proteins and subsequent signaling can be regulated by RGSZ proteins, such as RGS9, RGS17 and RGS4. Phosphorylation by members of the GPRK subfamily of Ser/Thr protein kinases and association with beta-arrestins is involved in short-term receptor desensitization. Beta-arrestins associate with the GPRK-phosphorylated receptor and uncouple it from the G-protein thus terminating signal transduction. The phosphorylated receptor is internalized through endocytosis via clathrin-coated pits which involves beta-arrestins. The activation of the ERK pathway occurs either in a G-protein-dependent or a beta-arrestin-dependent manner and is regulated by agonist-specific receptor phosphorylation. Acts as a class A G-protein coupled receptor (GPCR) which dissociates from beta-arrestin at or near the plasma membrane and undergoes rapid recycling. Receptor down-regulation pathways are varying with the agonist and occur dependent or independent of G-protein coupling. Endogenous ligands induce rapid desensitization, endocytosis and recycling. Heterooligomerization with other GPCRs can modulate agonist binding, signaling and trafficking properties. Involved in neurogenesis. The sequence is that of Mu-type opioid receptor (OPRM1) from Bos taurus (Bovine).